Here is an 82-residue protein sequence, read N- to C-terminus: Three-finger toxin MALT0063C (82 aa).

The N-terminal stretch at 1–21 is a signal peptide; it reads MRTLLLTLVVVTIVCLDLGNS. Disulfide bonds link Cys24-Cys42, Cys35-Cys60, Cys64-Cys72, and Cys73-Cys78.

This sequence belongs to the three-finger toxin family. Short-chain subfamily. Expressed by the venom gland.

The protein localises to the secreted. This is Three-finger toxin MALT0063C from Micrurus altirostris (Uruguayan coral snake).